A 595-amino-acid polypeptide reads, in one-letter code: MGGEVPEPRRLNRALSFDDWVPDEALHLVMGHVEDPRDREAASRVCRRWHRIDALTRKHVTVAFCYAARPARLRERFPRLESLSLKGKPRAAMYGLIPDDWGAYAAPWIDELAAPLECLKALHLRRMTVTDADIAALVRARGHMLQELKLDKCIGFSTDALRLVARSCRSLRTLFLEECHITDKGGEWLHELAVNNSVLVTLNFYMTELKVAPADLELLAKNCKSLISLKMSECDLSDLISFFQTANALQDFAGGAFYEVGELTKYEKVKFPPRLCFLGLTYMGTNEMPVIFPFSMKLKKLDLQYTFLTTEDHCQIIAKCPNLLILEVRNVIGDRGLEVVGDTCKKLRRLRIERGDDDPGLQEEQGGVSQLGLTAVAVGCRELEYIAAYVSDITNGALESIGTFCKNLYDFRLVLLDRERQVTDLPLDNGVCALLRNCTKLRRFALYLRPGGLSDDGLSYIGQYSGNIQYMLLGNVGESDHGLIRFAVGCTNLQKLELRSCCFSERALSLAVLQMPSLRYIWVQGYRASQTGLDLLLMARPFWNIEFTPPSPESFNHMTEDGEPCVDSHAQVLAYYSLAGRRSDCPQWVIPLHPA.

The F-box domain maps to 20-62 (WVPDEALHLVMGHVEDPRDREAASRVCRRWHRIDALTRKHVTV). Jasmonate contacts are provided by R90, R351, Y389, R412, and R499.

As to quaternary structure, interacts with TIFY6A/JAZ3, TIFY6B/JAZ4 and TIFY11D/JAZ12 in a coronatine-dependent manner. Interacts with TIFY9/JAZ5, TIFY10A/JAZ6, TIFY10B/JAZ7, TIFY11A/JAZ9 and TIFY11C/JAZ11 in a coronatine-dependent manner.

Involved in jasmonate (JA) signaling. Required for jasmonate signaling in plant defense responses. Can complement Arabidopsis coi1-1 mutant and restore jasmonate signaling. Required for JA-regulated defense responses to infestation by the leaffolder Cnaphalocrocis medinalis. May act on an initial response of jasmonate-regulated gene expression toward drought tolerance as part of a BHLH148-TIFY11D/JAZ12-COI1A complex. Component of SCF(COI1) E3 ubiquitin ligase complexes, which may mediate the ubiquitination and subsequent proteasomal degradation of target proteins, including TIFY/JAZ family. The sequence is that of Coronatine-insensitive protein homolog 1a from Oryza sativa subsp. indica (Rice).